Consider the following 217-residue polypeptide: 3-demethoxyubiquinol 3-hydroxylase (217 aa).

6 residues coordinate Fe cation: E66, E96, H99, E148, E180, and H183.

It belongs to the COQ7 family. The cofactor is Fe cation.

The protein localises to the cell membrane. It catalyses the reaction a 5-methoxy-2-methyl-3-(all-trans-polyprenyl)benzene-1,4-diol + AH2 + O2 = a 3-demethylubiquinol + A + H2O. Its pathway is cofactor biosynthesis; ubiquinone biosynthesis. Its function is as follows. Catalyzes the hydroxylation of 2-nonaprenyl-3-methyl-6-methoxy-1,4-benzoquinol during ubiquinone biosynthesis. This Xanthomonas oryzae pv. oryzae (strain MAFF 311018) protein is 3-demethoxyubiquinol 3-hydroxylase.